The primary structure comprises 811 residues: Capsid protein VP1 (811 aa).

Positions 321–367 are disordered; that stretch reads DSPMQEATKRKADSPAVETPAKKGTTGVNVNSQSTDPQNPSSSGATT. The segment covering 346-366 has biased composition (polar residues); it reads TGVNVNSQSTDPQNPSSSGAT.

The protein resides in the virion. Its function is as follows. Capsid protein self-assembles to form an icosahedral capsid with a T=1 symmetry, about 22 nm in diameter, and consisting of 60 copies of size variants of the capsid proteins, which differ in the N-terminushe capsid encapsulates the genomic ssDNA. Capsid proteins are responsible for the attachment to host cell receptors. This attachment induces virion internalization predominantly through clathrin-dependent endocytosis. In Galleria mellonella densovirus (GmDNV), this protein is Capsid protein VP1 (VP).